The primary structure comprises 329 residues: Quinone oxidoreductase (329 aa).

The residue at position 2 (alanine 2) is an N-acetylalanine. Lysine 23 carries the N6-acetyllysine modification. NADP(+)-binding positions include tyrosine 53, 158–161 (SGGV), glycine 181, histidine 200, asparagine 229, 246–249 (VGCR), and 269–271 (VSL). Position 296 is an N6-succinyllysine (lysine 296).

It belongs to the zinc-containing alcohol dehydrogenase family. Quinone oxidoreductase subfamily. Homotetramer.

Its subcellular location is the cytoplasm. It catalyses the reaction 2 a quinone + NADPH + H(+) = 2 a 1,4-benzosemiquinone + NADP(+). In terms of biological role, does not have alcohol dehydrogenase activity. Binds NADP and acts through a one-electron transfer process. Orthoquinones, such as 1,2-naphthoquinone or 9,10-phenanthrenequinone, are the best substrates (in vitro). May act in the detoxification of xenobiotics. Interacts with (AU)-rich elements (ARE) in the 3'-UTR of target mRNA species and enhances their stability. NADPH binding interferes with mRNA binding. The polypeptide is Quinone oxidoreductase (Cryz) (Rattus norvegicus (Rat)).